A 97-amino-acid chain; its full sequence is UPF0213 protein BLi00048/BL00536 (97 aa).

Positions 4 to 79 (NSHYFYVLSC…KKLSRKNKER (76 aa)) constitute a GIY-YIG domain.

It belongs to the UPF0213 family.

The polypeptide is UPF0213 protein BLi00048/BL00536 (Bacillus licheniformis (strain ATCC 14580 / DSM 13 / JCM 2505 / CCUG 7422 / NBRC 12200 / NCIMB 9375 / NCTC 10341 / NRRL NRS-1264 / Gibson 46)).